The following is a 158-amino-acid chain: Trafficking protein particle complex subunit 6B (158 aa).

It belongs to the TRAPP small subunits family. BET3 subfamily. In terms of assembly, homodimer. Part of a TRAPP complex. Heterodimer with TRAPPC3. The heterodimer TRAPPC6B-TRAPPC3 interacts with TRAPPC1 likely providing a core for TRAPP complex formation. Widely expressed. Expressed in lung, heart, liver, spleen, brain and kidney.

The protein localises to the golgi apparatus. The protein resides in the cis-Golgi network. Its subcellular location is the endoplasmic reticulum. In terms of biological role, component of a transport protein particle (TRAPP) complex that may function in specific stages of inter-organelle traffic. Specifically involved in the early development of neural circuitry, likely by controlling the frequency and amplitude of intracellular calcium transients implicated in the regulation of neuron differentiation and survival. The polypeptide is Trafficking protein particle complex subunit 6B (Mus musculus (Mouse)).